A 167-amino-acid polypeptide reads, in one-letter code: 2-C-methyl-D-erythritol 2,4-cyclodiphosphate synthase (167 aa).

The a divalent metal cation site is built by Asp-15 and His-17. 4-CDP-2-C-methyl-D-erythritol 2-phosphate contacts are provided by residues Asp-15–His-17 and His-43–Ser-44. Residue His-51 participates in a divalent metal cation binding. 4-CDP-2-C-methyl-D-erythritol 2-phosphate is bound by residues Asp-65–Gly-67, Thr-141–Glu-144, and Arg-151.

This sequence belongs to the IspF family. Homotrimer. A divalent metal cation serves as cofactor.

It catalyses the reaction 4-CDP-2-C-methyl-D-erythritol 2-phosphate = 2-C-methyl-D-erythritol 2,4-cyclic diphosphate + CMP. The protein operates within isoprenoid biosynthesis; isopentenyl diphosphate biosynthesis via DXP pathway; isopentenyl diphosphate from 1-deoxy-D-xylulose 5-phosphate: step 4/6. Involved in the biosynthesis of isopentenyl diphosphate (IPP) and dimethylallyl diphosphate (DMAPP), two major building blocks of isoprenoid compounds. Catalyzes the conversion of 4-diphosphocytidyl-2-C-methyl-D-erythritol 2-phosphate (CDP-ME2P) to 2-C-methyl-D-erythritol 2,4-cyclodiphosphate (ME-CPP) with a corresponding release of cytidine 5-monophosphate (CMP). In Prochlorococcus marinus (strain MIT 9312), this protein is 2-C-methyl-D-erythritol 2,4-cyclodiphosphate synthase.